A 417-amino-acid chain; its full sequence is Adenosylhomocysteinase (417 aa).

The substrate site is built by threonine 53, aspartate 125, and glutamate 149. 150–152 is a binding site for NAD(+); it reads TTT. Positions 179 and 183 each coordinate substrate. Residues asparagine 184, 213–218, glutamate 236, asparagine 271, 292–294, and asparagine 339 contribute to the NAD(+) site; these read GYGWVG and AGH.

The protein belongs to the adenosylhomocysteinase family. It depends on NAD(+) as a cofactor.

The protein resides in the cytoplasm. It catalyses the reaction S-adenosyl-L-homocysteine + H2O = L-homocysteine + adenosine. The protein operates within amino-acid biosynthesis; L-homocysteine biosynthesis; L-homocysteine from S-adenosyl-L-homocysteine: step 1/1. Functionally, may play a key role in the regulation of the intracellular concentration of adenosylhomocysteine. The chain is Adenosylhomocysteinase from Saccharolobus solfataricus (strain ATCC 35092 / DSM 1617 / JCM 11322 / P2) (Sulfolobus solfataricus).